The sequence spans 659 residues: DNA mismatch repair protein MutL (659 aa).

A disordered region spans residues Gly-338–Pro-459. The segment covering Ser-352–Ala-362 has biased composition (basic and acidic residues). Positions Ser-374–Pro-391 are enriched in polar residues.

Belongs to the DNA mismatch repair MutL/HexB family.

Functionally, this protein is involved in the repair of mismatches in DNA. It is required for dam-dependent methyl-directed DNA mismatch repair. May act as a 'molecular matchmaker', a protein that promotes the formation of a stable complex between two or more DNA-binding proteins in an ATP-dependent manner without itself being part of a final effector complex. In Halobacterium salinarum (strain ATCC 29341 / DSM 671 / R1), this protein is DNA mismatch repair protein MutL.